Here is a 183-residue protein sequence, read N- to C-terminus: Probable apo-citrate lyase phosphoribosyl-dephospho-CoA transferase (183 aa).

The protein belongs to the CitX family.

It catalyses the reaction apo-[citrate lyase ACP] + 2'-(5''-triphospho-alpha-D-ribosyl)-3'-dephospho-CoA = holo-[citrate lyase ACP] + diphosphate. Transfers 2-(5''-triphosphoribosyl)-3'-dephosphocoenzyme-A on a serine residue to the apo-acyl carrier protein (gamma chain) of the citrate lyase to yield holo-acyl carrier protein. This chain is Probable apo-citrate lyase phosphoribosyl-dephospho-CoA transferase, found in Escherichia coli (strain 55989 / EAEC).